Reading from the N-terminus, the 1331-residue chain is Retrotransposon-like protein 1 (1331 aa).

Disordered regions lie at residues Met1 to Asp123, Thr128 to Val147, Glu556 to Tyr595, and Pro971 to Asn1033. The span at Ser19–Ser30 shows a compositional bias: low complexity. Composition is skewed to acidic residues over residues Glu109 to Asp123, Thr128 to Asp143, and Gly569 to Pro578. Over residues Arg992–Thr1001 the composition is skewed to low complexity. A compositionally biased stretch (acidic residues) spans Pro1015–Glu1024. The next 2 membrane-spanning stretches (helical) occupy residues Phe1070–Leu1090 and Leu1117–Phe1137. Residues Ser1309 to Asp1331 form a disordered region. The segment covering Leu1320–Asp1331 has biased composition (acidic residues).

It is found in the membrane. Functionally, plays an essential role in capillaries endothelial cells for the maintenance of feto-maternal interface and for development of the placenta. This is Retrotransposon-like protein 1 (RTL1) from Bos taurus (Bovine).